Consider the following 894-residue polypeptide: MNQIEPGVQYNYVYEDDEYMIQEEEWDRDLLLDPAWEKQQRKTFTAWCNSHLRKAGTQIENIEEDFRNGLKLMLLLEVISGERLPKPDRGKMRFHKIANVNKALDYIASKGVKLVSIGAEEIVDGNVKMTLGMIWTIILRFAIQDISVEETSAKEGLLLWCQRKTAPYRNVNIQNFHTSWKDGLGLCALIHRHRPDLIDYSKLNKDDPIGNINLAMEIAEKHLDIPKMLDAEDIVNTPKPDERAIMTYVSCFYHAFAGAEQAETAANRICKVLAVNQENERLMEEYERLASELLEWIRRTIPWLENRTPEKTMQAMQKKLEDFRDYRRKHKPPKVQEKCQLEINFNTLQTKLRISNRPAFMPSEGKMVSDIAGAWQRLEQAEKGYEEWLLNEIRRLERVEHLAEKFRQKASTHETWAYGKEQILLQKDYESSTLTEVRALLRKHEAFESDLAAHQDRVEQIAAIAQELNELDYHDAVNVNDRCQKICDQWDRLGTLTQKRREALERTEKLLETIDQLHLEFAKRAAPFNNWMEGAMEDLQDMFIVHSIEEIQSLITAHEQFKATLPEADGERQSILAIQNEVEKVIQSYSIRISSSNPYSTVTVDEIRSKWDKVKQLVPIRDQSLQEELARQHANERLRRQFAAQANAIGPWIQNKMEEIARSSIQITGALEDQMNQLKQYEHNIINYKNNIDKLEGDHQLIQEALVFDNKHTNYTMEHIRVGWELLLTTIARTINEVETQILTRDAKGITQEQMNEFRASFNHFDRRKNGLMDHEDFRACLISMGYDLGEAEFARIMTLVDPNGQGTVTFQSFIDFMTRETADTDTAEQVIASFRILASDKPYILAEELRRELPPDQAQYCIKRMPAYSGPGSVPGALDYTAFSSALYGESDL.

Positions 1–254 (MNQIEPGVQY…IMTYVSCFYH (254 aa)) are actin-binding. 2 consecutive Calponin-homology (CH) domains span residues 38–142 (KQQR…LRFA) and 151–257 (TSAK…HAFA). The residue at position 237 (threonine 237) is a Phosphothreonine. 4 Spectrin repeats span residues 281 to 391 (RLME…WLLN), 401 to 506 (HLAE…ALER), 516 to 627 (QLHL…SLQE), and 637 to 740 (RLRR…EVET). EF-hand domains are found at residues 753–788 (EQMNEFRASFNHFDRRKNGLMDHEDFRACLISMGYD) and 789–824 (LGEAEFARIMTLVDPNGQGTVTFQSFIDFMTRETAD). Ca(2+) contacts are provided by aspartate 766, asparagine 770, aspartate 777, aspartate 802, asparagine 804, and threonine 808.

It belongs to the alpha-actinin family. Homodimer; antiparallel. Also forms heterodimers with ACTN3. Interacts with ADAM12, MYOZ1, MYOZ2 and MYOZ3. Interacts via its C-terminal region with the LDB3 PDZ domain. Interacts with XIRP2. Interacts with DST (via N-terminus). Interacts with PARVB. Interacts with SYNPO2. In terms of processing, ubiquitinated by FBXL22, leading to proteasomal degradation.

The protein resides in the cytoplasm. The protein localises to the myofibril. It localises to the sarcomere. It is found in the z line. F-actin cross-linking protein which is thought to anchor actin to a variety of intracellular structures. This is a bundling protein. In Bos taurus (Bovine), this protein is Alpha-actinin-2 (ACTN2).